Reading from the N-terminus, the 181-residue chain is Immunity-related GTPase family M protein (181 aa).

The IRG-type G domain occupies 32–181; the sequence is TPVNITMAGD…NLQKERVCEY (150 aa). Residues 41–48, 66–70, and 147–149 contribute to the GTP site; these read DSGNGMST, TELVK, and KLD.

This sequence belongs to the TRAFAC class dynamin-like GTPase superfamily. IRG family. Interacts with ULK1; promoting the coassembly of ULK1 and BECN1. Interacts with BECN1; enhancing BECN1-interacting partners and influencing the composition of the BECN1 complex. Interacts with ATG16L1. Interacts with NOD2; promoting IRGM 'Lys-63'-linked polyubiquitination, which is required for interactions with the core autophagy factors. Interacts with STX17; promoting STX17 recruitment to autophagosomes. Interacts with ATG8 proteins (GABARAP, GABARAPL1, GABARAPL2, MAP1LC3A, MAP1LC3B and MAP1LC3C); promoting STX17 recruitment to autophagosomes. Interacts with TFEB; promoting association between TFEB and PPP3CB and TFEB dephosphorylation. Interacts with PPP3CB; promoting association between TFEB and PPP3CB and TFEB dephosphorylation. Interacts with NLRP3; preventing NLRP3 inflammasome assembly and promoting SQSTM1/p62-dependent autophagic degradation of NLRP3. Interacts with CGAS; promoting SQSTM1/p62-dependent autophagic degradation of CGAS. Interacts with RIGI/RIG-I; promoting SQSTM1/p62-dependent autophagic degradation of RIGI/RIG-I. Interacts with NOD1; promoting SQSTM1/p62-dependent autophagic degradation of RIGI/RIG-I. Interacts with NOD2; promoting SQSTM1/p62-dependent autophagic degradation of RIGI/RIG-I. Interacts with RIPK2; promoting SQSTM1/p62-dependent autophagic degradation of RIGI/RIG-I. Ubiquitinated via 'Lys-63'-linked polyubiquitination in a NOD2-dependent process. 'Lys-63'-linked polyubiquitination is required for interactions with the core autophagy factors. In terms of tissue distribution, widely expressed (at protein level). Expressed in several tissues including colon, small bowel and peripheral blood leukocytes.

Its subcellular location is the golgi apparatus membrane. It is found in the cell membrane. It localises to the cytoplasmic vesicle. The protein resides in the phagosome membrane. The protein localises to the autophagosome membrane. Its subcellular location is the lysosome membrane. It is found in the late endosome membrane. It localises to the mitochondrion membrane. The protein resides in the cell projection. The protein localises to the phagocytic cup. Its subcellular location is the mitochondrion. The enzyme catalyses GTP + H2O = GDP + phosphate + H(+). Functionally, immunity-related GTPase that plays important roles in innate immunity and inflammatory response. Acts as a dynamin-like protein that binds to intracellular membranes and promotes remodeling and trafficking of those membranes. Required for clearance of acute protozoan and bacterial infections by interacting with autophagy and lysosome regulatory proteins, thereby promoting the fusion of phagosomes with lysosomes for efficient degradation of cargo including microbes. Regulates selective autophagy, including xenophagy and mitophagy, both directly and indirectly. Directly regulates autophagy by acting as a molecular adapter that promotes the coassembly of the core autophagy machinery to mediate antimicrobial defense: IRGM (1) activates AMPK, which in turn phosphorylates ULK1 and BECN1 to induce autophagy, (2) promotes the coassembly of ULK1 and BECN1, enhancing BECN1-interacting partners and (3) influences the composition of the BECN1 complex, by competing with the negative regulators BCL2 and RUBCN, to trigger autophagy. Also activates autophagy by promoting recruitment of STX17 to autophagosomes. In collaboration with ATG8 proteins, regulate lysosomal biogenesis, a fundamental process for any autophagic pathway, by promoting TFEB dephosphorylation. Also modulates autophagy by assisting with autophagosome formation and preventing lysosomal deacidification. While activating autophagy, acts as a key negative regulator of the inflammatory and interferon responses both by (1) promoting mitophagy and (2) mediating autophagy-dependent degradation of effectors of the inflammatory response. Promotes degradation of damaged and IFNG/IFN-gamma-stressed mitochondria via mitophagy, preventing cytosolic release of ligands that activate inflammation. Acts as a suppressor of inflammation by promoting recruitment of inflammation effectors, such as CGAS, RIGI/RIG-I and NLRP3, to autophagosome membranes, leading to their SQSTM1/p62-dependent autophagic degradation. Also directly inhibits assembly of the NLRP3 inflammasome by preventing the association between NLRP3 and PYCARD. Acts as a negative regulator of antiviral innate immune response by suppressing the RIPK2-dependent pro-inflammatory response: mediates recruitment of RIPosomes, composed of RIPK2 and NOD1 or NOD2, to autophagosome membranes, promoting their SQSTM1/p62-dependent autophagic degradation. Acts as a positive regulator of mitophagy in response to intracellular mycobacteria infection: specifically binds cardiolipin, leading to its translocation to mitochondria, where it promotes affected mitochondrial fission and mitophagy. In terms of biological role, (Microbial infection) Following infection by hepatitis C virus (HCV), promotes HCV-triggered membrane remodeling, leading to autophagy and Golgi fragmentation, a step required for HCV replication. In Homo sapiens (Human), this protein is Immunity-related GTPase family M protein.